Here is a 614-residue protein sequence, read N- to C-terminus: DNA mismatch repair protein MutL (614 aa).

Belongs to the DNA mismatch repair MutL/HexB family.

This protein is involved in the repair of mismatches in DNA. It is required for dam-dependent methyl-directed DNA mismatch repair. May act as a 'molecular matchmaker', a protein that promotes the formation of a stable complex between two or more DNA-binding proteins in an ATP-dependent manner without itself being part of a final effector complex. This chain is DNA mismatch repair protein MutL, found in Chlorobium phaeovibrioides (strain DSM 265 / 1930) (Prosthecochloris vibrioformis (strain DSM 265)).